A 394-amino-acid chain; its full sequence is NAD(P)H-quinone oxidoreductase subunit H (394 aa).

This sequence belongs to the complex I 49 kDa subunit family. NDH-1 can be composed of about 15 different subunits; different subcomplexes with different compositions have been identified which probably have different functions.

The protein localises to the cellular thylakoid membrane. It catalyses the reaction a plastoquinone + NADH + (n+1) H(+)(in) = a plastoquinol + NAD(+) + n H(+)(out). The enzyme catalyses a plastoquinone + NADPH + (n+1) H(+)(in) = a plastoquinol + NADP(+) + n H(+)(out). Functionally, NDH-1 shuttles electrons from an unknown electron donor, via FMN and iron-sulfur (Fe-S) centers, to quinones in the respiratory and/or the photosynthetic chain. The immediate electron acceptor for the enzyme in this species is believed to be plastoquinone. Couples the redox reaction to proton translocation, and thus conserves the redox energy in a proton gradient. Cyanobacterial NDH-1 also plays a role in inorganic carbon-concentration. This chain is NAD(P)H-quinone oxidoreductase subunit H, found in Prochlorococcus marinus (strain NATL2A).